We begin with the raw amino-acid sequence, 1109 residues long: DNA-directed RNA polymerase subunit beta (1109 aa).

This sequence belongs to the RNA polymerase beta chain family. As to quaternary structure, in plastids the minimal PEP RNA polymerase catalytic core is composed of four subunits: alpha, beta, beta', and beta''. When a (nuclear-encoded) sigma factor is associated with the core the holoenzyme is formed, which can initiate transcription.

The protein localises to the plastid. The protein resides in the chloroplast. The catalysed reaction is RNA(n) + a ribonucleoside 5'-triphosphate = RNA(n+1) + diphosphate. Functionally, DNA-dependent RNA polymerase catalyzes the transcription of DNA into RNA using the four ribonucleoside triphosphates as substrates. The sequence is that of DNA-directed RNA polymerase subunit beta from Nephroselmis olivacea (Green alga).